Consider the following 379-residue polypeptide: Dual-specificity RNA methyltransferase RlmN (379 aa).

Glutamate 95 functions as the Proton acceptor in the catalytic mechanism. The region spanning 101–345 is the Radical SAM core domain; it reads EETRGTLCVS…TTVRKTRGDD (245 aa). The cysteines at positions 108 and 350 are disulfide-linked. Cysteine 115, cysteine 119, and cysteine 122 together coordinate [4Fe-4S] cluster. S-adenosyl-L-methionine-binding positions include 176 to 177, serine 208, 230 to 232, and asparagine 307; these read GE and SLH. Cysteine 350 serves as the catalytic S-methylcysteine intermediate.

The protein belongs to the radical SAM superfamily. RlmN family. The cofactor is [4Fe-4S] cluster.

The protein localises to the cytoplasm. The enzyme catalyses adenosine(2503) in 23S rRNA + 2 reduced [2Fe-2S]-[ferredoxin] + 2 S-adenosyl-L-methionine = 2-methyladenosine(2503) in 23S rRNA + 5'-deoxyadenosine + L-methionine + 2 oxidized [2Fe-2S]-[ferredoxin] + S-adenosyl-L-homocysteine. It carries out the reaction adenosine(37) in tRNA + 2 reduced [2Fe-2S]-[ferredoxin] + 2 S-adenosyl-L-methionine = 2-methyladenosine(37) in tRNA + 5'-deoxyadenosine + L-methionine + 2 oxidized [2Fe-2S]-[ferredoxin] + S-adenosyl-L-homocysteine. In terms of biological role, specifically methylates position 2 of adenine 2503 in 23S rRNA and position 2 of adenine 37 in tRNAs. m2A2503 modification seems to play a crucial role in the proofreading step occurring at the peptidyl transferase center and thus would serve to optimize ribosomal fidelity. The chain is Dual-specificity RNA methyltransferase RlmN from Burkholderia ambifaria (strain MC40-6).